Here is a 1258-residue protein sequence, read N- to C-terminus: Non-secreted LysM effector LysM19 (1258 aa).

The interval 148–168 (VTQSLPNISSHEKRDDHEGNS) is disordered. Positions 157–168 (SHEKRDDHEGNS) are enriched in basic and acidic residues. LysM domains lie at 1028–1073 (IVYT…SICL) and 1179–1227 (RWHV…AYCT).

This sequence belongs to the secreted LysM effector family.

Non-secreted LysM effector that might be involved in manipulation of host defenses for successful infection. This Penicillium expansum (Blue mold rot fungus) protein is Non-secreted LysM effector LysM19.